Reading from the N-terminus, the 75-residue chain is Putative membrane protein insertion efficiency factor (75 aa).

Belongs to the UPF0161 family.

The protein resides in the cell membrane. Its function is as follows. Could be involved in insertion of integral membrane proteins into the membrane. The sequence is that of Putative membrane protein insertion efficiency factor from Bacillus cytotoxicus (strain DSM 22905 / CIP 110041 / 391-98 / NVH 391-98).